The primary structure comprises 620 residues: Phosphopentomutase (620 aa).

Alpha-D-glucose 1,6-bisphosphate contacts are provided by Arg71 and Ser173. Residue Ser173 is the Phosphoserine intermediate of the active site. Residues Ser173, Asp330, Asp332, and Asp334 each coordinate Mg(2+). The residue at position 173 (Ser173) is a Phosphoserine. Alpha-D-glucose 1,6-bisphosphate contacts are provided by Asp334, Arg335, Thr408, Glu432, and Lys446.

The protein belongs to the phosphohexose mutase family. As to quaternary structure, monomer. The cofactor is Mg(2+). Highly expressed in lung, spleen and thymus. Expressed at lower levels in liver, brain, kidney, skeletal muscle, testis and heart.

It localises to the cytoplasm. It is found in the cytosol. It carries out the reaction alpha-D-ribose 1-phosphate = D-ribose 5-phosphate. The catalysed reaction is 2-deoxy-alpha-D-ribose 1-phosphate = 2-deoxy-D-ribose 5-phosphate. It catalyses the reaction alpha-D-glucose 1-phosphate = alpha-D-glucose 6-phosphate. The enzyme catalyses O-phospho-L-seryl-[protein] + alpha-D-glucose 1-phosphate = alpha-D-glucose 1,6-bisphosphate + L-seryl-[protein]. It carries out the reaction alpha-D-glucose 1,6-bisphosphate + L-seryl-[protein] = O-phospho-L-seryl-[protein] + alpha-D-glucose 6-phosphate. Its function is as follows. Catalyzes the conversion of the nucleoside breakdown products ribose-1-phosphate and deoxyribose-1-phosphate to the corresponding 5-phosphopentoses. Catalyzes the reversible isomerization of alpha-D-glucose 1-phosphate to alpha-D-glucose 6-phosphate but with a lower catalytic efficiency. The mechanism proceeds via the intermediate compound alpha-D-glucose 1,6-bisphosphate. In vitro, also has a low glucose 1,6-bisphosphate synthase activity which is most probably not physiologically relevant. This Mus musculus (Mouse) protein is Phosphopentomutase.